The sequence spans 217 residues: Adenylate kinase (217 aa).

ATP is bound at residue 10 to 15 (GAGKGT). Positions 30–59 (STGDMLRAAVKAGTPLGLQAKDIMASGGLV) are NMP. AMP contacts are provided by residues Thr31, Arg36, 57–59 (GLV), 85–88 (GFPR), and Gln92. Residues 122-159 (GRRVHEASGRVYHIIHNAPRVEGHDDVTGEPLVQRPDD) are LID. ATP contacts are provided by residues Arg123 and 132–133 (VY). Arg156 and Arg167 together coordinate AMP. Gly203 lines the ATP pocket.

Belongs to the adenylate kinase family. As to quaternary structure, monomer.

It localises to the cytoplasm. The enzyme catalyses AMP + ATP = 2 ADP. Its pathway is purine metabolism; AMP biosynthesis via salvage pathway; AMP from ADP: step 1/1. Functionally, catalyzes the reversible transfer of the terminal phosphate group between ATP and AMP. Plays an important role in cellular energy homeostasis and in adenine nucleotide metabolism. This is Adenylate kinase from Cellvibrio japonicus (strain Ueda107) (Pseudomonas fluorescens subsp. cellulosa).